The primary structure comprises 457 residues: 3-ketoacyl-CoA thiolase 5, peroxisomal (457 aa).

The transit peptide at 1-37 (MERAMERQKILLRHLNPVSSSNSSLKHEPSLLSPVNC) directs the protein to the peroxisome. The active-site Acyl-thioester intermediate is the cysteine 137. Catalysis depends on proton acceptor residues histidine 394 and cysteine 426.

It belongs to the thiolase-like superfamily. Thiolase family. As to quaternary structure, homodimer. In terms of tissue distribution, expressed in seedlings and wounded leaves.

The protein localises to the peroxisome. It catalyses the reaction an acyl-CoA + acetyl-CoA = a 3-oxoacyl-CoA + CoA. The protein operates within lipid metabolism; fatty acid metabolism. Its function is as follows. Probably involved in long chain fatty-acid beta-oxidation prior to gluconeogenesis during germination and subsequent seedling growth. Involved in systemic jasmonic acid (JA) biosynthesis after wounding and may be during senescence. This Arabidopsis thaliana (Mouse-ear cress) protein is 3-ketoacyl-CoA thiolase 5, peroxisomal (KAT5).